We begin with the raw amino-acid sequence, 148 residues long: Lysozyme C (148 aa).

Residues 1–18 form the signal peptide; that stretch reads MKAVIILGLVLLSVTVQG. The 130-residue stretch at 19–148 folds into the C-type lysozyme domain; that stretch reads KIFERCELAR…VSQYVQGCGV (130 aa). Cystine bridges form between cysteine 24/cysteine 146, cysteine 48/cysteine 134, cysteine 83/cysteine 99, and cysteine 95/cysteine 113. Active-site residues include glutamate 53 and aspartate 71.

This sequence belongs to the glycosyl hydrolase 22 family. As to quaternary structure, monomer.

It carries out the reaction Hydrolysis of (1-&gt;4)-beta-linkages between N-acetylmuramic acid and N-acetyl-D-glucosamine residues in a peptidoglycan and between N-acetyl-D-glucosamine residues in chitodextrins.. Its function is as follows. Lysozymes have primarily a bacteriolytic function; those in tissues and body fluids are associated with the monocyte-macrophage system and enhance the activity of immunoagents. This is Lysozyme C (LYZ) from Erythrocebus patas (Red guenon).